The sequence spans 738 residues: Platelet endothelial cell adhesion molecule (738 aa).

An N-terminal signal peptide occupies residues 1 to 27 (MQPRWAQGATMWLGVLLTLLLCSSLEG). Topologically, residues 28 to 601 (QENSFTINSV…VRVILAPWKK (574 aa)) are extracellular. Ig-like C2-type domains are found at residues 35 to 121 (NSVD…KTTA), 145 to 233 (GGIV…TESF), and 236 to 315 (PKFH…SKVS). N-linked (GlcNAc...) asparagine glycosylation is found at Asn52, Asn84, and Asn151. Cys57 and Cys109 are oxidised to a cystine. 2 disulfides stabilise this stretch: Cys152-Cys206 and Cys256-Cys304. N-linked (GlcNAc...) asparagine glycans are attached at residues Asn301, Asn320, Asn344, Asn356, Asn453, and Asn551. 3 Ig-like C2-type domains span residues 328-401 (PELE…NTVQ), 424-493 (GQTI…EVLR), and 499-591 (PVDE…KILT). Disulfide bonds link Cys347–Cys386, Cys431–Cys476, and Cys523–Cys572. A helical membrane pass occupies residues 602-620 (GLIAVVIIGVIIALLIIAA). Residues 621 to 738 (KCYFLRKAKA…SRTEGSLDGT (118 aa)) are Cytoplasmic-facing. Cys622 is lipidated: S-palmitoyl cysteine. Positions 658–715 (EANSHYGHNDDVRNHAMKPINDNKEPLNSDVQYTEVQVSSAESHKDLGKKDTETVYSE) are disordered. Residues 686–698 (SDVQYTEVQVSSA) show a composition bias toward polar residues. 2 short sequence motifs (ITIM motif) span residues 688 to 693 (VQYTEV) and 711 to 716 (TVYSEV). A phosphotyrosine; by FER mark is found at Tyr690 and Tyr713. The span at 699 to 715 (ESHKDLGKKDTETVYSE) shows a compositional bias: basic and acidic residues. The tract at residues 709–729 (TETVYSEVRKAVPDAVESRYS) is membrane-bound segment which detaches upon phosphorylation. Residues 721–738 (PDAVESRYSRTEGSLDGT) form a may play a role in cytoprotective signaling region. Ser729 and Ser734 each carry phosphoserine.

As to quaternary structure, trans-homodimer (via Ig-like C2-type 1 and Ig-like C2-type 2 domains); trans-homodimerization is required for cell-cell interaction. Forms a complex with BDKRB2 and GNAQ. Interacts with BDKRB2 and GNAQ. Interacts with PTPN11; Tyr-713 is critical for PTPN11 recruitment. Interacts with FER. Interacts (via Ig-like C2-type domain 6) with CD177; the interaction is Ca(2+)-dependent; the interaction is direct. Phosphorylated on Ser and Tyr residues after cellular activation by src kinases. Upon activation, phosphorylated on Ser-729 which probably initiates the dissociation of the membrane-interaction segment (residues 709-729) from the cell membrane allowing the sequential phosphorylation of Tyr-713 and Tyr-690. Constitutively phosphorylated on Ser-734 in resting platelets. Phosphorylated on tyrosine residues by FER and FES in response to FCER1 activation. In endothelial cells Fyn mediates mechanical-force (stretch or pull) induced tyrosine phosphorylation. Post-translationally, palmitoylation by ZDHHC21 is necessary for cell surface expression in endothelial cells and enrichment in membrane rafts. Expressed on platelets and leukocytes and is primarily concentrated at the borders between endothelial cells. Expressed in human umbilical vein endothelial cells (HUVECs) (at protein level). Expressed on neutrophils (at protein level). Isoform Long predominates in all tissues examined. Isoform Delta12 is detected only in trachea. Isoform Delta14-15 is only detected in lung. Isoform Delta14 is detected in all tissues examined with the strongest expression in heart. Isoform Delta15 is expressed in brain, testis, ovary, cell surface of platelets, human umbilical vein endothelial cells (HUVECs), Jurkat T-cell leukemia, human erythroleukemia (HEL) and U-937 histiocytic lymphoma cell lines (at protein level).

It is found in the cell membrane. Its subcellular location is the membrane raft. The protein resides in the cell junction. Cell adhesion molecule which is required for leukocyte transendothelial migration (TEM) under most inflammatory conditions. Tyr-690 plays a critical role in TEM and is required for efficient trafficking of PECAM1 to and from the lateral border recycling compartment (LBRC) and is also essential for the LBRC membrane to be targeted around migrating leukocytes. Trans-homophilic interaction may play a role in endothelial cell-cell adhesion via cell junctions. Heterophilic interaction with CD177 plays a role in transendothelial migration of neutrophils. Homophilic ligation of PECAM1 prevents macrophage-mediated phagocytosis of neighboring viable leukocytes by transmitting a detachment signal. Promotes macrophage-mediated phagocytosis of apoptotic leukocytes by tethering them to the phagocytic cells; PECAM1-mediated detachment signal appears to be disabled in apoptotic leukocytes. Modulates bradykinin receptor BDKRB2 activation. Regulates bradykinin- and hyperosmotic shock-induced ERK1/2 activation in endothelial cells. Induces susceptibility to atherosclerosis. In terms of biological role, does not protect against apoptosis. The protein is Platelet endothelial cell adhesion molecule (PECAM1) of Homo sapiens (Human).